We begin with the raw amino-acid sequence, 151 residues long: MFLHLDSHSSLERTKPTVVGVDTHMELDEVHCCPGRDSGGGFIKGPMLQGLQGEGKLAPIPKPTLPSPSRLTLFVSSSQMEDHGFPARRNGLTQASFIYQMPAGWGSPGGLFLPCQPVPTPVVLKPPLPPCPISWGESGPAVDGIRRTPAP.

This is an uncharacterized protein from Homo sapiens (Human).